The sequence spans 304 residues: Aspartate carbamoyltransferase catalytic subunit (304 aa).

R49 and T50 together coordinate carbamoyl phosphate. K77 is an L-aspartate binding site. Carbamoyl phosphate is bound by residues R99, H127, and Q130. Residues R160 and R211 each coordinate L-aspartate. Carbamoyl phosphate is bound by residues A252 and P253.

This sequence belongs to the aspartate/ornithine carbamoyltransferase superfamily. ATCase family. Heterododecamer (2C3:3R2) of six catalytic PyrB chains organized as two trimers (C3), and six regulatory PyrI chains organized as three dimers (R2).

The enzyme catalyses carbamoyl phosphate + L-aspartate = N-carbamoyl-L-aspartate + phosphate + H(+). Its pathway is pyrimidine metabolism; UMP biosynthesis via de novo pathway; (S)-dihydroorotate from bicarbonate: step 2/3. Its function is as follows. Catalyzes the condensation of carbamoyl phosphate and aspartate to form carbamoyl aspartate and inorganic phosphate, the committed step in the de novo pyrimidine nucleotide biosynthesis pathway. This Bacillus mycoides (strain KBAB4) (Bacillus weihenstephanensis) protein is Aspartate carbamoyltransferase catalytic subunit.